The sequence spans 911 residues: Viral IRF4-like protein (911 aa).

The segment at residues 7–114 (SEWATLWIID…GSYVVWQLVR (108 aa)) is a DNA-binding region (IRF tryptophan pentad repeat). Disordered regions lie at residues 147 to 184 (TTAT…PRKS), 211 to 302 (ASTS…SRLP), 494 to 537 (GGAP…PYVC), and 681 to 727 (ELQE…FFDP). Positions 211–221 (ASTSGMGSSGT) are enriched in low complexity. Polar residues-rich tracts occupy residues 222-231 (RQVTQASSFT) and 495-505 (GAPNQGLSHTQ). Residues 697-710 (RRPRSRSPHGRRTP) are compositionally biased toward basic residues.

It belongs to the IRF family. Interacts with host MDM2; this interaction facilitates the proteasomal degradation of TP53/p53. Interacts with host IRF7; this interaction prevents IRF7 dimerization and subsequent activation.

It localises to the host nucleus. Functionally, plays a role in host cell apoptosis modulation by promoting TP53/p53 ubiquitination and subsequent degradation and thus down-regulating TP53/p53-mediated apoptosis. Works as a potential viral transcription factor to modulate host gene expression to build favorable environments for the viral lytic life cycle and greatly accelerates the induction of an immediate early gene RTA, early genes ORF36 and ORF57, late genes ORF25 and ORF64, and latent genes LANA1 and v-IRF3. Inhibits host interferon-alpha production by interacting with host IRF7 and preventing IRF7 dimerization. The chain is Viral IRF4-like protein (vIRF-4) from Homo sapiens (Human).